A 587-amino-acid chain; its full sequence is 2-succinyl-5-enolpyruvyl-6-hydroxy-3-cyclohexene-1-carboxylate synthase (587 aa).

It belongs to the TPP enzyme family. MenD subfamily. In terms of assembly, homodimer. Requires Mg(2+) as cofactor. It depends on Mn(2+) as a cofactor. The cofactor is thiamine diphosphate.

It carries out the reaction isochorismate + 2-oxoglutarate + H(+) = 5-enolpyruvoyl-6-hydroxy-2-succinyl-cyclohex-3-ene-1-carboxylate + CO2. It functions in the pathway quinol/quinone metabolism; 1,4-dihydroxy-2-naphthoate biosynthesis; 1,4-dihydroxy-2-naphthoate from chorismate: step 2/7. The protein operates within cofactor biosynthesis; phylloquinone biosynthesis. Functionally, catalyzes the thiamine diphosphate-dependent decarboxylation of 2-oxoglutarate and the subsequent addition of the resulting succinic semialdehyde-thiamine pyrophosphate anion to isochorismate to yield 2-succinyl-5-enolpyruvyl-6-hydroxy-3-cyclohexene-1-carboxylate (SEPHCHC). In Prochlorococcus marinus (strain MIT 9312), this protein is 2-succinyl-5-enolpyruvyl-6-hydroxy-3-cyclohexene-1-carboxylate synthase.